The chain runs to 224 residues: Glutathione S-transferase U4 (224 aa).

The GST N-terminal domain occupies 6 to 85; that stretch reads EDVKLLGFWA…YIDQIWKNNP (80 aa). Glutathione contacts are provided by residues 16–17, 42–43, 56–57, and 69–70; these read SP, NK, KV, and ES. Positions 90–217 constitute a GST C-terminal domain; sequence DPYEKAMALF…EEQIEHMKKV (128 aa). At Thr-151 the chain carries Phosphothreonine.

It belongs to the GST superfamily. Tau family.

It localises to the cytoplasm. It is found in the cytosol. It carries out the reaction RX + glutathione = an S-substituted glutathione + a halide anion + H(+). Its function is as follows. May be involved in the conjugation of reduced glutathione to a wide number of exogenous and endogenous hydrophobic electrophiles and have a detoxification role against certain herbicides. The sequence is that of Glutathione S-transferase U4 (GSTU4) from Arabidopsis thaliana (Mouse-ear cress).